Consider the following 679-residue polypeptide: MHKYHLNSPYLPKGDQPKAISELVYGVNQGKQYQTLLGATGTGKTFTIANVIEQTGRPTLVLAHNKTLAAQLCNELREFFPKNAVEYFISYYDYYQPEAYVPVSDTYIAKTSSVNEEIDMLRHSATRSLFERRDVIVVASISCIYGLGIPSEYLKASVKFQLGNDINVRESLRELVSNQYVRNDVDISRGNFRIKGDVLEIGPAYEDRLVRIELFGDEVEAIRYVDPITGEILENLNSINIYPAKHFVTPKDRLLIAIQSIQKELKDQLDFFNQEGKLLEAQRLEQRTKYDIEMLKEVGYCNGVENYARHLSGRDQGTPPECLIDYFPEDWLLVVDESHVTCSQLQAMYNGDQSRKKVLIDHGFRLPSAADNRPLKSDEFWSKAKQTVFISATPGDWECEVSTDGIVEQVIRPTGVLDPVVEVRPTAGQIDDLLDEIRKRVIKKERVLITTLTKRMAEDLSDYLSENRVKVRYLHSEIHSIERIEIIQDLRVGEYDVLVGVNLLREGLDLPEVSLVVILDADKEGFLRAKRSLIQTIGRAARHVDGFALLYADNLTESMSTAIQETERRRAIQQAYNQKHGIIPKPAGKKPSNSILSFLELSRKLQNEGDNADLVSITSKAVDSLNQSEDLGIAFVELPEIIDKLEGKMNLAAEELDFEQAAKLRDRIRQLRKKLSKPE.

The Helicase ATP-binding domain maps to Y25–V176. G38 to T45 contacts ATP. The Beta-hairpin signature appears at Y91–V114. A Helicase C-terminal domain is found at Q429–P591. One can recognise a UVR domain in the interval P639–K674.

The protein belongs to the UvrB family. In terms of assembly, forms a heterotetramer with UvrA during the search for lesions. Interacts with UvrC in an incision complex.

It localises to the cytoplasm. In terms of biological role, the UvrABC repair system catalyzes the recognition and processing of DNA lesions. A damage recognition complex composed of 2 UvrA and 2 UvrB subunits scans DNA for abnormalities. Upon binding of the UvrA(2)B(2) complex to a putative damaged site, the DNA wraps around one UvrB monomer. DNA wrap is dependent on ATP binding by UvrB and probably causes local melting of the DNA helix, facilitating insertion of UvrB beta-hairpin between the DNA strands. Then UvrB probes one DNA strand for the presence of a lesion. If a lesion is found the UvrA subunits dissociate and the UvrB-DNA preincision complex is formed. This complex is subsequently bound by UvrC and the second UvrB is released. If no lesion is found, the DNA wraps around the other UvrB subunit that will check the other stand for damage. The sequence is that of UvrABC system protein B from Prochlorococcus marinus (strain MIT 9211).